The sequence spans 95 residues: Aspartyl/glutamyl-tRNA(Asn/Gln) amidotransferase subunit C (95 aa).

The protein belongs to the GatC family. Heterotrimer of A, B and C subunits.

The enzyme catalyses L-glutamyl-tRNA(Gln) + L-glutamine + ATP + H2O = L-glutaminyl-tRNA(Gln) + L-glutamate + ADP + phosphate + H(+). The catalysed reaction is L-aspartyl-tRNA(Asn) + L-glutamine + ATP + H2O = L-asparaginyl-tRNA(Asn) + L-glutamate + ADP + phosphate + 2 H(+). Allows the formation of correctly charged Asn-tRNA(Asn) or Gln-tRNA(Gln) through the transamidation of misacylated Asp-tRNA(Asn) or Glu-tRNA(Gln) in organisms which lack either or both of asparaginyl-tRNA or glutaminyl-tRNA synthetases. The reaction takes place in the presence of glutamine and ATP through an activated phospho-Asp-tRNA(Asn) or phospho-Glu-tRNA(Gln). This is Aspartyl/glutamyl-tRNA(Asn/Gln) amidotransferase subunit C from Caldanaerobacter subterraneus subsp. tengcongensis (strain DSM 15242 / JCM 11007 / NBRC 100824 / MB4) (Thermoanaerobacter tengcongensis).